A 122-amino-acid chain; its full sequence is Ribosome-binding factor A (122 aa).

Belongs to the RbfA family. In terms of assembly, monomer. Binds 30S ribosomal subunits, but not 50S ribosomal subunits or 70S ribosomes.

Its subcellular location is the cytoplasm. In terms of biological role, one of several proteins that assist in the late maturation steps of the functional core of the 30S ribosomal subunit. Associates with free 30S ribosomal subunits (but not with 30S subunits that are part of 70S ribosomes or polysomes). Required for efficient processing of 16S rRNA. May interact with the 5'-terminal helix region of 16S rRNA. The chain is Ribosome-binding factor A from Caldanaerobacter subterraneus subsp. tengcongensis (strain DSM 15242 / JCM 11007 / NBRC 100824 / MB4) (Thermoanaerobacter tengcongensis).